The primary structure comprises 271 residues: WUSCHEL-related homeobox 6 (271 aa).

Positions 57–121 (AATLRWNPTP…NHKARERLKR (65 aa)) form a DNA-binding region, homeobox; WUS-type. Positions 118-195 (RLKRRRREGG…TEESDQRASE (78 aa)) are disordered. 2 stretches are compositionally biased toward basic and acidic residues: residues 132 to 148 (PHKD…RVDQ) and 180 to 195 (NEDH…RASE).

Belongs to the WUS homeobox family. Highly expressed in developing ovules. Present in developing primordia and differentiating organs but absent in mature organs.

The protein resides in the nucleus. Its function is as follows. Transcription factor that plays a central role in ovule patterning by regulating cell proliferation of the maternal integuments and differentiation of the maegaspore mother cell (MCC). Involved in AGAMOUS (AG) repression in leaves. The protein is WUSCHEL-related homeobox 6 (WOX6) of Arabidopsis thaliana (Mouse-ear cress).